Consider the following 571-residue polypeptide: Coenzyme A biosynthesis protein 3 (571 aa).

Disordered stretches follow at residues 1–72 and 100–120; these read MTDE…YKND and INTS…PSLP. Residues 8 to 35 are compositionally biased toward polar residues; sequence SDQNMNGKQGVNLISSLPTTQVPVSILT. Serine 42 carries the post-translational modification Phosphoserine. Residues 43–59 are compositionally biased toward basic and acidic residues; that stretch reads IHDESNFERSDSHEDQS. The span at 60–72 shows a compositional bias: polar residues; that stretch reads KSNSNRRNIYKND. Residues serine 116, serine 121, and serine 124 each carry the phosphoserine modification. Disordered stretches follow at residues 140 to 171 and 209 to 244; these read ISNK…LQEQ and IFKE…SMEK. The span at 146–171 shows a compositional bias: low complexity; that stretch reads KQQQQQEQLQQNQQQEEQQKAQLQEQ. Position 264 is a phosphoserine (serine 264). The tract at residues 507–571 is disordered; it reads RDEETGDKEQ…EDEEDVKTEV (65 aa). Over residues 516 to 571 the composition is skewed to acidic residues; the sequence is QEQEEQEGADNEDDDDEDDEEDEEDEEEEEALNETASDESNDEEDEEDEEDVKTEV.

Belongs to the HFCD (homooligomeric flavin containing Cys decarboxylase) superfamily. In terms of assembly, component of the phosphopantothenoylcysteine decarboxylase (PPCDC) complex, a heterotrimer composed of CAB3, HAL3 and VHS3.

The protein resides in the cytoplasm. Its function is as follows. Component of the phosphopantothenoylcysteine decarboxylase (PPCDC) involved in the coenzyme A synthesis. The protein is Coenzyme A biosynthesis protein 3 (CAB3) of Saccharomyces cerevisiae (strain ATCC 204508 / S288c) (Baker's yeast).